The sequence spans 389 residues: Type II methyltransferase M1.ScrFI (389 aa).

The HTH cro/C1-type domain maps to 16 to 71 (IKEKRLRLNMTQKELADAVGMSKNGDRTIRRWENGETCPSQLEISAILRFPEIAPF). The SAM-dependent MTase C5-type domain occupies 79–387 (YKMIDLFAGI…EKMLEVLEKS (309 aa)). The active site involves C149.

This sequence belongs to the class I-like SAM-binding methyltransferase superfamily. C5-methyltransferase family.

It catalyses the reaction a 2'-deoxycytidine in DNA + S-adenosyl-L-methionine = a 5-methyl-2'-deoxycytidine in DNA + S-adenosyl-L-homocysteine + H(+). Functionally, a methylase, recognizes the double-stranded sequence 5'-CCNGG-3', methylates C-2 on both strands, and protects the DNA from cleavage by the ScrFI endonuclease. The sequence is that of Type II methyltransferase M1.ScrFI (scrFIAM) from Lactococcus lactis subsp. cremoris (Streptococcus cremoris).